The primary structure comprises 355 residues: UDP-N-acetylglucosamine--N-acetylmuramyl-(pentapeptide) pyrophosphoryl-undecaprenol N-acetylglucosamine transferase (355 aa).

UDP-N-acetyl-alpha-D-glucosamine-binding positions include 13-15 (TGG), Asn-125, Arg-162, Ser-190, Ile-244, and Gln-289.

This sequence belongs to the glycosyltransferase 28 family. MurG subfamily.

It localises to the cell inner membrane. It carries out the reaction di-trans,octa-cis-undecaprenyl diphospho-N-acetyl-alpha-D-muramoyl-L-alanyl-D-glutamyl-meso-2,6-diaminopimeloyl-D-alanyl-D-alanine + UDP-N-acetyl-alpha-D-glucosamine = di-trans,octa-cis-undecaprenyl diphospho-[N-acetyl-alpha-D-glucosaminyl-(1-&gt;4)]-N-acetyl-alpha-D-muramoyl-L-alanyl-D-glutamyl-meso-2,6-diaminopimeloyl-D-alanyl-D-alanine + UDP + H(+). It participates in cell wall biogenesis; peptidoglycan biosynthesis. In terms of biological role, cell wall formation. Catalyzes the transfer of a GlcNAc subunit on undecaprenyl-pyrophosphoryl-MurNAc-pentapeptide (lipid intermediate I) to form undecaprenyl-pyrophosphoryl-MurNAc-(pentapeptide)GlcNAc (lipid intermediate II). This Neisseria meningitidis serogroup C / serotype 2a (strain ATCC 700532 / DSM 15464 / FAM18) protein is UDP-N-acetylglucosamine--N-acetylmuramyl-(pentapeptide) pyrophosphoryl-undecaprenol N-acetylglucosamine transferase.